Consider the following 620-residue polypeptide: Leucine-rich repeat and immunoglobulin-like domain-containing nogo receptor-interacting protein 1 (620 aa).

Positions Met1 to Gly41 are cleaved as a signal peptide. Disulfide bonds link Cys42-Cys48 and Cys46-Cys57. The region spanning Cys42–Thr71 is the LRRNT domain. The Extracellular portion of the chain corresponds to Cys42–Thr561. LRR repeat units lie at residues Glu72–Ser93, His96–Asn117, Asn120–Gly141, Asn144–Asp165, Asn168–Gly189, Ser192–His213, Gly216–Arg237, Asn264–His285, Tyr288–Glu309, Arg312–Gly333, and Tyr336–Ser357. A glycan (N-linked (GlcNAc...) asparagine) is linked at Asn144. N-linked (GlcNAc...) asparagine glycosylation is present at Asn202. 3 N-linked (GlcNAc...) asparagine glycosylation sites follow: Asn264, Asn274, and Asn293. Residue Asn341 is glycosylated (N-linked (GlcNAc...) asparagine). The region spanning Asn369–Arg423 is the LRRCT domain. 3 disulfide bridges follow: Cys373–Cys396, Cys375–Cys421, and Cys446–Cys497. Positions Pro411–His513 constitute an Ig-like C2-type domain. Residues Asn492, Asn505, Asn526, and Asn542 are each glycosylated (N-linked (GlcNAc...) asparagine). The chain crosses the membrane as a helical span at residues Thr562 to Trp582. Over Ser583–Ile620 the chain is Cytoplasmic. At Ser602 the chain carries Phosphoserine.

In terms of assembly, homotetramer. Forms a ternary complex with RTN4R/NGFR and RTN4R/TNFRSF19. Interacts with NGRF and MYT1L. Interacts with RTN4R. Post-translationally, N-glycosylated. Contains predominantly high-mannose glycans. As to expression, expressed exclusively in the central nervous system. Highest level in the in amygdala, hippocampus, thalamus and cerebral cortex. In the rest of the brain a basal expression seems to be always present. Up-regulated in substantia nigra neurons from Parkinson disease patients.

It is found in the cell membrane. Its function is as follows. Functional component of the Nogo receptor signaling complex (RTN4R/NGFR) in RhoA activation responsible for some inhibition of axonal regeneration by myelin-associated factors. Is also an important negative regulator of oligodentrocyte differentiation and axonal myelination. Acts in conjunction with RTN4 and RTN4R in regulating neuronal precursor cell motility during cortical development. In Homo sapiens (Human), this protein is Leucine-rich repeat and immunoglobulin-like domain-containing nogo receptor-interacting protein 1 (LINGO1).